Reading from the N-terminus, the 181-residue chain is MPTQRKIETVQELTEKLSRAQLVVVADYRGEGRGMSVADMTELRRKLREHGGEVVVAKNTLLKIAANHTGRGALDPLLAGPTAVTFAYDDVAKVAKALLDYLKSGNKSFTVRGALLGQALLPADALEQVTKLPSREQALAQVVGGIAAPVSGVVGVLNAAISNVLYVLQARIDQLQPQSSS.

Belongs to the universal ribosomal protein uL10 family. Part of the ribosomal stalk of the 50S ribosomal subunit. The N-terminus interacts with L11 and the large rRNA to form the base of the stalk. The C-terminus forms an elongated spine to which L12 dimers bind in a sequential fashion forming a multimeric L10(L12)X complex.

Forms part of the ribosomal stalk, playing a central role in the interaction of the ribosome with GTP-bound translation factors. The protein is Large ribosomal subunit protein uL10 of Chloroflexus aggregans (strain MD-66 / DSM 9485).